The following is a 238-amino-acid chain: ATP-dependent Clp protease ATP-binding subunit CLPT1, chloroplastic (238 aa).

The transit peptide at 1–64 (MASYTVSFIP…VPKLRCLTSA (64 aa)) directs the protein to the chloroplast. In terms of domain architecture, Clp R spans 83-228 (IPKWSARAIK…KEVEKSMNED (146 aa)). Repeat stretches follow at residues 86 to 151 (WSAR…LGKS) and 163 to 228 (LTEP…MNED).

The protein belongs to the ClpA/ClpB family. Monomer and homodimer. Binds to the CLP3-6 ring (P-ring). The dimers monomerize before association to the P-ring. Component of the chloroplastic Clp protease core complex which consist of at least 16 proteins: CLPP4 (3 copies), CLPP5 (3 copies), CLPR4 (2 copies), ClpP1 (1 copy), CLPP6 (1 copy), CLPR2 (1 copy), CLPT1 (1 copy), CLPT2 (1 copy) and 3 copies of CLPP3 and/or CLPR1 and/or CLPR3. Interacts with CLPC2 and CLPD. Interacts with CPN21. No interactions with CLPS1.

The protein localises to the plastid. It is found in the chloroplast. Functionally, accessory protein regulating the assembly of the plastidial Clp protease system. CLPT1 first binds to the heptameric P-ring containing the CLP3-6 subunits followed by CLPT2, and only then does the P-ring combine with the R-ring composed of the clpP1 and CLPR1-4 subunits. Once the core complex is fully assembled, it then associates to the CLPC chaperone partner to form the functional protease. CLPT1 and CLPT2 are partially redundant. This chain is ATP-dependent Clp protease ATP-binding subunit CLPT1, chloroplastic, found in Arabidopsis thaliana (Mouse-ear cress).